Here is a 201-residue protein sequence, read N- to C-terminus: Peptide deformylase 2 (201 aa).

Fe cation-binding residues include C121 and H163. E164 is a catalytic residue. H167 is a Fe cation binding site.

It belongs to the polypeptide deformylase family. Fe(2+) serves as cofactor.

It carries out the reaction N-terminal N-formyl-L-methionyl-[peptide] + H2O = N-terminal L-methionyl-[peptide] + formate. In terms of biological role, removes the formyl group from the N-terminal Met of newly synthesized proteins. Requires at least a dipeptide for an efficient rate of reaction. N-terminal L-methionine is a prerequisite for activity but the enzyme has broad specificity at other positions. This chain is Peptide deformylase 2, found in Prochlorococcus marinus (strain MIT 9313).